The primary structure comprises 50 residues: Thrombin-like enzyme BpirSP27 (50 aa).

Residues 1-50 enclose the Peptidase S1 domain; it reads VVGGDECNINEHRSLVAIFNSTGFFCSGILLNQEWVLTASHCDSTNFQMK. N20 carries an N-linked (GlcNAc...) asparagine glycan. Cysteines 26 and 42 form a disulfide. The active-site Charge relay system is the H41.

This sequence belongs to the peptidase S1 family. Snake venom subfamily. In terms of assembly, monomer. N-glycosylated. Expressed by the venom gland.

It is found in the secreted. With respect to regulation, inhibited by serine protease inhibitors PMSF, benzamidine, leupeptin and aprotinin, as well as by copper (Cu2+) and manganese (Mn2+) ions. Not inhibited by metalloprotease inhibitors EDTA, EGTA and 1,10-phenanthroline, as well as by barium (Ba2+) and calcium ion (Ca2+). In terms of biological role, snake venom serine protease that interferes with the hemostatic system of the prey. It preferentially degrades the Bbeta chain (FGB) of fibrinogen, with minor effects on the Aalpha chain (FGA). It presents a lower ability to degrade fibrin clots than BpirSP41. It hydrolyzes chromogenic substrates S-2238 (used for testing thrombin activity), S-2222 (factor Xa), S-2266 (glandular kallikrein and factor XIa), S-2302 (plasma kallikrein, factor XIa and XIIa), and S-2251 (plasmin). It shows a decrease in the clotting time of human plasma in the presence of increasing doses of the enzyme. Its minimum coagulant dose (MCD) is 3.5 ug. It also promotes platelet aggregation in a concentration-dependent manner in the presence or absence of calcium. It also shows 20% inhibition of the hemolytic activity promoted by the complement pathways and possess only a minor role in the induction of edema and pain in rat. This chain is Thrombin-like enzyme BpirSP27, found in Bothrops pirajai (Piraja's lancehead).